Reading from the N-terminus, the 79-residue chain is MKVTGIFLLSALALLSLSGNTGADSLGREAKCYNELNGCTKIYDPVCGTDGNTYPNECVLCFENRKRQTSILIQKSGPC.

Positions 1–23 (MKVTGIFLLSALALLSLSGNTGA) are cleaved as a signal peptide. The 54-residue stretch at 26–79 (LGREAKCYNELNGCTKIYDPVCGTDGNTYPNECVLCFENRKRQTSILIQKSGPC) folds into the Kazal-like domain. 3 disulfides stabilise this stretch: Cys-32-Cys-61, Cys-39-Cys-58, and Cys-47-Cys-79.

Its subcellular location is the secreted. Its function is as follows. Serine protease inhibitor which exhibits anti-trypsin activity. In the pancreas, protects against trypsin-catalyzed premature activation of zymogens. Functionally, in the male reproductive tract, binds to sperm heads where it modulates sperm capacitance by inhibiting calcium uptake and nitrogen oxide (NO) production. The protein is Serine protease inhibitor Kazal-type 1 (SPINK1) of Homo sapiens (Human).